Here is a 421-residue protein sequence, read N- to C-terminus: Lipid II:glycine glycyltransferase (421 aa).

Belongs to the FemABX family. In terms of assembly, monomer.

The protein resides in the cytoplasm. It catalyses the reaction beta-D-GlcNAc-(1-&gt;4)-Mur2Ac(oyl-L-Ala-D-isoglutaminyl-L-Lys-D-Ala-D-Ala)-di-trans,octa-cis-undecaprenyl diphosphate + glycyl-tRNA(Gly) = beta-D-GlcNAc-(1-&gt;4)-Mur2Ac(oyl-L-Ala-D-isoglutaminyl-L-Lys-(N(6)-Gly)-D-Ala-D-Ala)-di-trans,octa-cis-undecaprenyl diphosphate + tRNA(Gly) + H(+). Its function is as follows. Catalyzes the incorporation of the first glycine of the pentaglycine interpeptide bridge, which is characteristic of the S.aureus peptidoglycan. This glycine is added to the epsilon-amino group of the L-lysine of the membrane-bound lipid II intermediate (GlcNAc-(beta-1,4)-N-acetylmuramic acid(-L-Ala-D-iGln-L-Lys-D-Ala-D-Ala)-pyrophosphoryl-undecaprenol), using glycyl-tRNA(Gly) as donor, in a ribosome-independent mechanism. Involved in methicillin resistance. The protein is Lipid II:glycine glycyltransferase (femX) of Staphylococcus aureus (strain MRSA252).